The chain runs to 237 residues: Putative N-acetylmannosamine-6-phosphate 2-epimerase (237 aa).

This sequence belongs to the NanE family.

It catalyses the reaction an N-acyl-D-glucosamine 6-phosphate = an N-acyl-D-mannosamine 6-phosphate. It functions in the pathway amino-sugar metabolism; N-acetylneuraminate degradation; D-fructose 6-phosphate from N-acetylneuraminate: step 3/5. Functionally, converts N-acetylmannosamine-6-phosphate (ManNAc-6-P) to N-acetylglucosamine-6-phosphate (GlcNAc-6-P). This chain is Putative N-acetylmannosamine-6-phosphate 2-epimerase, found in Listeria monocytogenes serotype 4a (strain HCC23).